Reading from the N-terminus, the 351-residue chain is Protein Wnt-4 (351 aa).

Residues 1-22 (MSPEYFLRSLLLIILATFSANA) form the signal peptide. 2 N-linked (GlcNAc...) asparagine glycosylation sites follow: Asn-21 and Asn-88. Cystine bridges form between Cys-78–Cys-89, Cys-128–Cys-136, Cys-138–Cys-155, Cys-206–Cys-220, Cys-208–Cys-215, Cys-280–Cys-311, Cys-296–Cys-306, Cys-310–Cys-350, Cys-326–Cys-341, Cys-328–Cys-338, and Cys-333–Cys-334. A lipid anchor (O-palmitoleoyl serine; by PORCN) is attached at Ser-212. N-linked (GlcNAc...) asparagine glycosylation is present at Asn-297.

The protein belongs to the Wnt family. Interacts with CPZ. In terms of processing, palmitoleoylation is required for efficient binding to frizzled receptors. Depalmitoleoylation leads to Wnt signaling pathway inhibition. Predominantly expressed in the diencephalon neuromere D2.

It is found in the secreted. It localises to the extracellular space. Its subcellular location is the extracellular matrix. In terms of biological role, ligand for members of the frizzled family of seven transmembrane receptors. Plays an important role in embryonic development. The polypeptide is Protein Wnt-4 (WNT4) (Gallus gallus (Chicken)).